The chain runs to 488 residues: Glutamyl-tRNA(Gln) amidotransferase subunit A (488 aa).

Active-site charge relay system residues include Lys-77 and Ser-152. Ser-176 functions as the Acyl-ester intermediate in the catalytic mechanism.

This sequence belongs to the amidase family. GatA subfamily. Heterotrimer of A, B and C subunits.

The catalysed reaction is L-glutamyl-tRNA(Gln) + L-glutamine + ATP + H2O = L-glutaminyl-tRNA(Gln) + L-glutamate + ADP + phosphate + H(+). Functionally, allows the formation of correctly charged Gln-tRNA(Gln) through the transamidation of misacylated Glu-tRNA(Gln) in organisms which lack glutaminyl-tRNA synthetase. The reaction takes place in the presence of glutamine and ATP through an activated gamma-phospho-Glu-tRNA(Gln). The polypeptide is Glutamyl-tRNA(Gln) amidotransferase subunit A (Streptococcus pyogenes serotype M5 (strain Manfredo)).